Here is a 265-residue protein sequence, read N- to C-terminus: Exosome complex component Rrp4 (265 aa).

One can recognise an S1 motif domain in the interval 65–137; that stretch reads GDNVIGKIVD…EVNNIDLTTK (73 aa). The 59-residue stretch at 147–205 folds into the KH domain; it reads KGGQIVKITPSRVPRVIGRGGSMINMIKKLTMTRIIVGQNGWIWVSGKNDALEKLAIEA. The interval 241 to 265 is disordered; that stretch reads EIPKLEEEPQGEDEVNGNDGEARGA.

It belongs to the RRP4 family. As to quaternary structure, component of the archaeal exosome complex. Forms a trimer of Rrp4 and/or Csl4 subunits. The trimer associates with a hexameric ring-like arrangement composed of 3 Rrp41-Rrp42 heterodimers.

The protein resides in the cytoplasm. Non-catalytic component of the exosome, which is a complex involved in RNA degradation. Increases the RNA binding and the efficiency of RNA degradation. Confers strong poly(A) specificity to the exosome. This chain is Exosome complex component Rrp4, found in Pyrococcus abyssi (strain GE5 / Orsay).